A 202-amino-acid polypeptide reads, in one-letter code: uncharacterized protein (202 aa).

A disordered region spans residues 118 to 202; the sequence is SSVSPVSSKK…KVSGTKKVKA (85 aa). Ser121 carries the post-translational modification Phosphoserine. 2 stretches are compositionally biased toward basic residues: residues 142–163 and 186–202; these read EKSK…KSKR and SSKS…KVKA.

The protein localises to the nucleus. It is found in the nucleolus. This is an uncharacterized protein from Schizosaccharomyces pombe (strain 972 / ATCC 24843) (Fission yeast).